The following is a 575-amino-acid chain: Adenine deaminase 1 (575 aa).

The protein belongs to the metallo-dependent hydrolases superfamily. Adenine deaminase family. Requires Mn(2+) as cofactor.

The enzyme catalyses adenine + H2O + H(+) = hypoxanthine + NH4(+). The sequence is that of Adenine deaminase 1 from Agrobacterium fabrum (strain C58 / ATCC 33970) (Agrobacterium tumefaciens (strain C58)).